A 275-amino-acid chain; its full sequence is MTVIALFGAGGKMGYRLAKNLKGSRFDVRHVEVSDAGKARLKNDLDLSCVPVDEALNGAEVVILAVPDTAIGKVAAGIVDKLKPGTMVVALDAAAPFAGHLPKRDELTYFVTHPCHPPIFNDETDMQAKKDHFGGLFAKQHIVSALMQGPESAYALGEEIAKVIWAPVMRSHRVTVEQMAMLEPGLSETVCASLLVVMRQAMDECVARGVPEDAARDFLLGHMNVLGAVIFKEVDGVFSDACNKAIEFGIPALMRDDWKNVFEPKEIAASIQRIT.

Residues 11 to 13 (GKM), glutamate 32, and aspartate 68 each bind NAD(+). 2 residues coordinate Zn(2+): histidine 113 and glutamate 183.

It belongs to the ApnO family. Zn(2+) is required as a cofactor.

The catalysed reaction is D-apionate + NAD(+) = 3-oxoisoapionate + NADH + H(+). Its pathway is carbohydrate metabolism. Involved in catabolism of D-apiose. Catalyzes the conversion of D-apionate to 3-oxo-isoapionate. The sequence is that of D-apionate oxidoisomerase from Rhizobium rhizogenes (strain K84 / ATCC BAA-868) (Agrobacterium radiobacter).